The sequence spans 230 residues: MSSVTTPAPVYTWTADEAIKFLKEWNFSLGIILLFITIILQFGYTSRSMFVYVIKMIILWLMWPLTIILTIFNCVYALNNVYLGFSIVFTIVAIIMWIVYFVNSIRLFIRTGSWWSFNPETNNLMCIDMKGRMYVRPIIEDYHTLTVTIIRGHLYMQGIKLGTGYSLSDLPAYVTVAKVSHLLTYKRGFLDRIGDTSGFAVYVKSKVGNYRLPSTQKGSGMDTALLRNNI.

Topologically, residues 1-24 are virion surface; sequence MSSVTTPAPVYTWTADEAIKFLKE. Residues 25–45 traverse the membrane as a helical segment; that stretch reads WNFSLGIILLFITIILQFGYT. Over 46-55 the chain is Intravirion; the sequence is SRSMFVYVIK. A helical transmembrane segment spans residues 56–76; the sequence is MIILWLMWPLTIILTIFNCVY. Topologically, residues 77–84 are virion surface; the sequence is ALNNVYLG. Residues 85–105 form a helical membrane-spanning segment; sequence FSIVFTIVAIIMWIVYFVNSI. The Intravirion portion of the chain corresponds to 106–228; that stretch reads RLFIRTGSWW…SGMDTALLRN (123 aa).

Belongs to the betacoronaviruses M protein family. As to quaternary structure, homomultimer. Interacts with envelope E protein in the budding compartment of the host cell, which is located between endoplasmic reticulum and the Golgi complex. Forms a complex with HE and S proteins. Interacts with nucleocapsid N protein. This interaction probably participates in RNA packaging into the virus.

Its subcellular location is the virion membrane. The protein resides in the host Golgi apparatus membrane. Its function is as follows. Component of the viral envelope that plays a central role in virus morphogenesis and assembly via its interactions with other viral proteins. The chain is Membrane protein from Bos taurus (Bovine).